A 204-amino-acid chain; its full sequence is UPF0637 protein SAR1080 (204 aa).

The protein belongs to the UPF0637 family.

The protein is UPF0637 protein SAR1080 of Staphylococcus aureus (strain MRSA252).